A 365-amino-acid chain; its full sequence is MILKKLSVLNYKNILQSEVIFSPKMNCFFGNNGMGKTNLLDAIHYLSFCKSHVNTPDSQIINSDQDLCVVQGNYDYEGREEEIFCAMRRRQRKQFKRNKKEYDKLSEHIGLLPLVMVSPADADLIRGGSDERRRFLDLIISQQDKPYLHALIQYNKALLQRNTLLKDQSMDASLYEVLEMQLGMYGQIVYEKRKKLVEDFTPIFNEYYQTICGSAEEVGLHYISQLEETELAGKLAMSRERDRILGYTSSGIHKDELEMTLGGYLIRRVGSQGQNKTYLIALKLAQFAFLNKRGQTTPILLLDDIFDKLDASRVEQIIKLVSENGFGQIFITDTNRKYLDEILLAMNHDYALFRVERGEVQPMEE.

Position 30 to 37 (Gly30 to Thr37) interacts with ATP.

It belongs to the RecF family.

It localises to the cytoplasm. Functionally, the RecF protein is involved in DNA metabolism; it is required for DNA replication and normal SOS inducibility. RecF binds preferentially to single-stranded, linear DNA. It also seems to bind ATP. This chain is DNA replication and repair protein RecF, found in Parabacteroides distasonis (strain ATCC 8503 / DSM 20701 / CIP 104284 / JCM 5825 / NCTC 11152).